Here is a 115-residue protein sequence, read N- to C-terminus: Holo-[acyl-carrier-protein] synthase (115 aa).

Aspartate 8 and glutamate 50 together coordinate Mg(2+).

It belongs to the P-Pant transferase superfamily. AcpS family. The cofactor is Mg(2+).

It localises to the cytoplasm. It carries out the reaction apo-[ACP] + CoA = holo-[ACP] + adenosine 3',5'-bisphosphate + H(+). Transfers the 4'-phosphopantetheine moiety from coenzyme A to a Ser of acyl-carrier-protein. This Pseudarthrobacter chlorophenolicus (strain ATCC 700700 / DSM 12829 / CIP 107037 / JCM 12360 / KCTC 9906 / NCIMB 13794 / A6) (Arthrobacter chlorophenolicus) protein is Holo-[acyl-carrier-protein] synthase.